Consider the following 343-residue polypeptide: Mitotic checkpoint protein bub-3 (343 aa).

7 WD repeats span residues 21–62 (PPFV…DISE), 67–105 (THGK…GTQL), 107–146 (SHAL…NGAI), 150–187 (NVSS…EPLQ), 192–232 (PLKY…EMMK), 249–288 (ELIH…RIIQ), and 291–331 (KFET…NSIT). The interval 322 to 343 (PSPLPNNSITIRHITDPESRPK) is disordered. The segment covering 334–343 (HITDPESRPK) has biased composition (basic and acidic residues).

Belongs to the WD repeat BUB3 family. In terms of assembly, may interact with bub-1; for localization at the kinetochore and the onset of anaphase.

It localises to the chromosome. The protein localises to the centromere. The protein resides in the kinetochore. It is found in the nucleus. Its function is as follows. Has a dual function in spindle-assembly checkpoint signaling and in promoting the establishment of correct kinetochore-microtubule (K-MT) attachments. Promotes the formation of stable end-on bipolar attachments of chromosomes. Necessary for expression and kinetochore localization of bub-1. Plays a role in synapsis checkpoint signaling inducing apoptosis in response to unsynapsed chromosomes and thus controlling chromosomal segregation during oocyte meiosis. This chain is Mitotic checkpoint protein bub-3, found in Caenorhabditis elegans.